We begin with the raw amino-acid sequence, 213 residues long: Isopentenyl-diphosphate Delta-isomerase (213 aa).

Residues 1-10 show a composition bias toward basic and acidic residues; it reads MRDSMSEADR. Residues 1-34 are disordered; that stretch reads MRDSMSEADRSSPGSGKTDREDETAENATQDVIA. Positions 51, 58, and 95 each coordinate Mn(2+). Positions 56-193 constitute a Nudix hydrolase domain; the sequence is VRHRAFTCLL…RQLRLCPWFE (138 aa). Glu-113 contributes to the Mg(2+) binding site. Glu-142 and Glu-144 together coordinate Mn(2+). The active site involves Glu-144.

Belongs to the IPP isomerase type 1 family. Requires Mg(2+) as cofactor. It depends on Mn(2+) as a cofactor.

The protein localises to the cytoplasm. It catalyses the reaction isopentenyl diphosphate = dimethylallyl diphosphate. It functions in the pathway isoprenoid biosynthesis; dimethylallyl diphosphate biosynthesis; dimethylallyl diphosphate from isopentenyl diphosphate: step 1/1. In terms of biological role, catalyzes the 1,3-allylic rearrangement of the homoallylic substrate isopentenyl (IPP) to its highly electrophilic allylic isomer, dimethylallyl diphosphate (DMAPP). This Halobacterium salinarum (strain ATCC 700922 / JCM 11081 / NRC-1) (Halobacterium halobium) protein is Isopentenyl-diphosphate Delta-isomerase.